A 278-amino-acid chain; its full sequence is NAD kinase (278 aa).

D67 serves as the catalytic Proton acceptor. NAD(+) is bound by residues 67 to 68 (DG), R72, 137 to 138 (NE), K148, R165, D167, 178 to 183 (TGYAMS), A202, and Q237.

This sequence belongs to the NAD kinase family. It depends on a divalent metal cation as a cofactor.

It localises to the cytoplasm. The catalysed reaction is NAD(+) + ATP = ADP + NADP(+) + H(+). Functionally, involved in the regulation of the intracellular balance of NAD and NADP, and is a key enzyme in the biosynthesis of NADP. Catalyzes specifically the phosphorylation on 2'-hydroxyl of the adenosine moiety of NAD to yield NADP. The polypeptide is NAD kinase (Thermococcus kodakarensis (strain ATCC BAA-918 / JCM 12380 / KOD1) (Pyrococcus kodakaraensis (strain KOD1))).